We begin with the raw amino-acid sequence, 103 residues long: Small ribosomal subunit protein uS10 (103 aa).

The protein belongs to the universal ribosomal protein uS10 family. As to quaternary structure, part of the 30S ribosomal subunit.

Functionally, involved in the binding of tRNA to the ribosomes. The sequence is that of Small ribosomal subunit protein uS10 from Novosphingobium aromaticivorans (strain ATCC 700278 / DSM 12444 / CCUG 56034 / CIP 105152 / NBRC 16084 / F199).